We begin with the raw amino-acid sequence, 340 residues long: Pre-rRNA-processing protein esf-2 (340 aa).

Basic and acidic residues-rich tracts occupy residues 1–12 (MPEDDVRNKFLD) and 19–32 (DAGHGSDSEDDFQK). Residues 1–103 (MPEDDVRNKF…KSVLASDLPG (103 aa)) are disordered. The span at 44–64 (DDEDSEADDFTDAEEEHDQDD) shows a compositional bias: acidic residues. Residues 65–95 (AESKDAPAKDGQETTDGKEKKDGKKEKEKKS) show a composition bias toward basic and acidic residues. The RRM domain maps to 124 to 214 (GVVYISRVPP…KKGSYYRDDI (91 aa)). Residues 272–329 (AKKASKGSKAGGEGAAQVTESTIPSAAATTTTTTNDDKRRTFKQIPLAKKRKLDETQP) form a disordered region.

Belongs to the ESF2/ABP1 family.

The protein resides in the nucleus. It localises to the nucleolus. In terms of biological role, involved in the small subunit (SSU) processome assembly and function, and in the 18S rRNA synthesis. Required for the early cleavages at sites A0, A1 and A2. The chain is Pre-rRNA-processing protein esf-2 (esf-2) from Neurospora crassa (strain ATCC 24698 / 74-OR23-1A / CBS 708.71 / DSM 1257 / FGSC 987).